The following is a 145-amino-acid chain: D-aminoacyl-tRNA deacylase (145 aa).

A Gly-cisPro motif, important for rejection of L-amino acids motif is present at residues 137 to 138 (GP).

This sequence belongs to the DTD family. In terms of assembly, homodimer.

Its subcellular location is the cytoplasm. The enzyme catalyses glycyl-tRNA(Ala) + H2O = tRNA(Ala) + glycine + H(+). It catalyses the reaction a D-aminoacyl-tRNA + H2O = a tRNA + a D-alpha-amino acid + H(+). Functionally, an aminoacyl-tRNA editing enzyme that deacylates mischarged D-aminoacyl-tRNAs. Also deacylates mischarged glycyl-tRNA(Ala), protecting cells against glycine mischarging by AlaRS. Acts via tRNA-based rather than protein-based catalysis; rejects L-amino acids rather than detecting D-amino acids in the active site. By recycling D-aminoacyl-tRNA to D-amino acids and free tRNA molecules, this enzyme counteracts the toxicity associated with the formation of D-aminoacyl-tRNA entities in vivo and helps enforce protein L-homochirality. This is D-aminoacyl-tRNA deacylase from Francisella tularensis subsp. holarctica (strain FTNF002-00 / FTA).